The primary structure comprises 315 residues: Putative steroid dehydrogenase 3 (315 aa).

Residue 47-76 (ASWAVITGGTDGIGKSFSFELAKRGFNIYI) coordinates NADP(+). Tyr-202 is a catalytic residue.

This sequence belongs to the short-chain dehydrogenases/reductases (SDR) family. 17-beta-HSD 3 subfamily.

The sequence is that of Putative steroid dehydrogenase 3 (stdh-3) from Caenorhabditis elegans.